The following is a 536-amino-acid chain: Xylulose kinase (536 aa).

Positions 99, 170, 280, and 281 each coordinate substrate. Residues tryptophan 355, 441-442, and asparagine 445 contribute to the ATP site; that span reads GA.

The protein belongs to the FGGY kinase family. In terms of assembly, monomer.

It carries out the reaction D-xylulose + ATP = D-xylulose 5-phosphate + ADP + H(+). In terms of biological role, phosphorylates D-xylulose to produce D-xylulose 5-phosphate, a molecule that may play an important role in the regulation of glucose metabolism and lipogenesis. The chain is Xylulose kinase (Xylb) from Rattus norvegicus (Rat).